The chain runs to 249 residues: Bis(5'-nucleosyl)-tetraphosphatase PrpE [asymmetrical] (249 aa).

Belongs to the PrpE family. Requires Ni(2+) as cofactor.

The enzyme catalyses P(1),P(4)-bis(5'-guanosyl) tetraphosphate + H2O = GMP + GTP + 2 H(+). In terms of biological role, asymmetrically hydrolyzes Ap4p to yield AMP and ATP. The polypeptide is Bis(5'-nucleosyl)-tetraphosphatase PrpE [asymmetrical] (Bacillus velezensis (strain DSM 23117 / BGSC 10A6 / LMG 26770 / FZB42) (Bacillus amyloliquefaciens subsp. plantarum)).